A 41-amino-acid chain; its full sequence is Large ribosomal subunit protein bL36 (41 aa).

This sequence belongs to the bacterial ribosomal protein bL36 family.

The protein is Large ribosomal subunit protein bL36 of Rickettsia prowazekii (strain Madrid E).